Reading from the N-terminus, the 669-residue chain is Glutaminase kidney isoform, mitochondrial (669 aa).

The N-terminal 54 residues, 1 to 54, are a transit peptide targeting the mitochondrion; it reads MMRLRGSGMLRDLLLRSPAGVSATLRRAQPLVTLCRRPRGGGRPAAGPAAAARL. The disordered stretch occupies residues 68-118; that stretch reads LARGLSSSPSEILQELGKGSTHPQPGVSPPAAPAAPGPKDGPGETDAFGNS. Over residues 93-103 the composition is skewed to pro residues; the sequence is GVSPPAAPAAP. N6-succinyllysine is present on residues K130 and K164. S286 lines the substrate pocket. N6-acetyllysine is present on K311. Residues 315-322 form a highly mobile activation loop region; that stretch reads GLRFNKLF. Positions 335, 381, 388, 414, 466, and 484 each coordinate substrate. ANK repeat units follow at residues 585 to 614 and 619 to 648; these read DSRT…VNPF and WNNT…QYTP. The tract at residues 647–669 is disordered; it reads TPQGDSDNGKENQTVHKNLDGLL. S652 is subject to Phosphoserine. Positions 653-669 are enriched in basic and acidic residues; it reads DNGKENQTVHKNLDGLL.

This sequence belongs to the glutaminase family. As to quaternary structure, homotetramer, dimer of dimers. The tetramers can assemble into rod-like oligomers (in vitro), but the physiological significance of this is not clear. Interacts with RAF1 and MAP2K2. Interacts with ATCAY; the interaction is direct and may control GLS localization, negatively regulating its activity. Post-translationally, synthesized as a 74-kDa cytosolic precursor which is proteolytically processed by the mitochondrial-processing peptidase (MPP) via a 72-kDa intermediate to yield the mature mitochondrial 68- and 65-kDa subunits. As to expression, isoform 1 and isoform 3 are detected in brain cortex. Isoform 3 is highly expressed in astrocytoma, ganglioglioma and ependymoma. Isoform 1 is highly expressed in brain and kidney, but not detected in liver. Isoform 3 is highly expressed in heart and pancreas, detected at lower levels in placenta, lung, pancreas and kidney, but is not detected in liver. Isoform 2 is expressed in cardiac and skeletal muscle.

The protein resides in the mitochondrion. The protein localises to the cytoplasm. It is found in the cytosol. Its subcellular location is the mitochondrion matrix. It carries out the reaction L-glutamine + H2O = L-glutamate + NH4(+). With respect to regulation, isoform 1 and isoform 3 are activated by phosphate. Inhibited by BPTES. BPTES binds between subunits and favors dissociation of the tetramer into dimers. Inhibited by 6-diazo-5-oxo-L-norleucine (DON). Enzyme activity is stimulated by phosphorylation. Functionally, catalyzes the first reaction in the primary pathway for the renal catabolism of glutamine. Plays a role in maintaining acid-base homeostasis. Regulates the levels of the neurotransmitter glutamate, the main excitatory neurotransmitter in the brain. In terms of biological role, lacks catalytic activity. The sequence is that of Glutaminase kidney isoform, mitochondrial (GLS) from Homo sapiens (Human).